Here is a 699-residue protein sequence, read N- to C-terminus: MLKLSGEGLRDSYHSRRDQIALKNLQSDVTEAKSDFTKETLASQNTKMISSIVISQMIDENKSRENRASLPLPCAIAQSRAHHAKQSLANRSGVNIHRAFALLPGRLGIPAPSDERGPEAELPPKEERPCGGPRRGFASITITARRVGPPARALVWGTAGDSLCPKCRAEDTLFQAPPALANGAHPGRHQRSFACTEFSRNSSVVRLKVPEAHTGLCERRKYWVTHADDKETSFSPDTPLSGKSPLVFSSCVHLRVSQQCPDSIYYVDKSLSVPIEPPQIASPKMHRSVLSLNLNCSSHRLTADGVDGLVNREPISEALKQELLEGDQDLVGQRWNPGLQESHLKETPSLRRVHLGTGACPWSGSFPLENTELANVGANQVTVRKGEKDHTTHCHASDHANQLSIHIPGWSYRAVHTKVFSGSSKRQQGEVCMTVSAPPVEQKPTRHFLPIGDSSPSDDCLSRDLSEPTERRHQSFLKPRILFPGFLCPLQDVCASLQEDNGVQIESKFPKGDYTCCDLVVKIKECKKSEDPTTPEPSPAAPSPAPRDGAGSPGLSEDCSESQQTPARSLTLQEALEVRKPQFISRSQERLKKLEHMVQQRKAQRKEDLRQKQSLLPIRTSKKQFTIPHPLSDNLFKPKERCISEKEMHMRSKRIYDNLPEVKKKKEEQRKRVILQSNRLRAEVFKKQLLDQLLQRNAV.

The required for interaction with p53/TP53 stretch occupies residues 48-116 (MISSIVISQM…LGIPAPSDER (69 aa)). 3 disordered regions span residues 107 to 134 (LGIPAPSDERGPEAELPPKEERPCGGPR), 443 to 473 (KPTRHFLPIGDSSPSDDCLSRDLSEPTERRH), and 528 to 569 (KSED…PARS). Composition is skewed to basic and acidic residues over residues 113–129 (SDERGPEAELPPKEERP) and 460–473 (CLSRDLSEPTERRH). The tract at residues 116–224 (RGPEAELPPK…GLCERRKYWV (109 aa)) is required for interaction with HDAC1. Residues 534 to 545 (TPEPSPAAPSPA) show a composition bias toward pro residues. The ALMS motif stretch occupies residues 571–699 (TLQEALEVRK…LDQLLQRNAV (129 aa)).

As to quaternary structure, interacts with HDAC1; the interaction prevents binding of HDAC1 to CDKN1A/p21 and facilitates the acetylation and stabilization of CDKN1A/p21. Interacts with p53/TP53; the interaction inhibits binding of p53/TP53 and MDM2.

It is found in the cytoplasm. The protein resides in the cytoskeleton. The protein localises to the microtubule organizing center. It localises to the centrosome. In terms of biological role, tumor suppressor that is required to sustain G2/M checkpoint after DNA damage. Acts as a p53/TP53 activator by inhibiting MDM2 binding to p53/TP53 and stimulating non-proteolytic polyubiquitination of p53/TP53. Exhibits ubiquitin ligase (E3) activity and assemble ubiquitin polymers through 'Lys-11'- (K11-), 'Lys-29'- (K29-) and 'Lys-63'- (K63)-linkages, independently of the ubiquitin-conjugating enzyme (E2). Promotes p53/TP53-dependent transcription of CDKN1A/p21, leading to robust checkpoint response. Mediates CDKN1A/p21 protein stability in a ubiquitin-independent manner. Interacts with HDAC1 and prevents binding of HDAC1 to CDKN1A/p21 and facilitates the acetylation and stabilization of CDKN1A/p21. May have a role in the assembly of primary cilia. The polypeptide is (E2-independent) E3 ubiquitin-conjugating enzyme FATS (Homo sapiens (Human)).